The following is a 1407-amino-acid chain: DNA-directed RNA polymerase subunit beta' (1407 aa).

Positions 70, 72, 85, and 88 each coordinate Zn(2+). Mg(2+) is bound by residues Asp460, Asp462, and Asp464. Zn(2+) contacts are provided by Cys814, Cys888, Cys895, and Cys898. N6-acetyllysine is present on Lys972.

Belongs to the RNA polymerase beta' chain family. In terms of assembly, the RNAP catalytic core consists of 2 alpha, 1 beta, 1 beta' and 1 omega subunit. When a sigma factor is associated with the core the holoenzyme is formed, which can initiate transcription. It depends on Mg(2+) as a cofactor. Zn(2+) serves as cofactor.

It catalyses the reaction RNA(n) + a ribonucleoside 5'-triphosphate = RNA(n+1) + diphosphate. DNA-dependent RNA polymerase catalyzes the transcription of DNA into RNA using the four ribonucleoside triphosphates as substrates. This chain is DNA-directed RNA polymerase subunit beta', found in Shigella dysenteriae serotype 1 (strain Sd197).